Consider the following 160-residue polypeptide: Small ribosomal subunit protein uS7 (160 aa).

This sequence belongs to the universal ribosomal protein uS7 family. In terms of assembly, part of the 30S ribosomal subunit. Contacts proteins S9 and S11.

Its function is as follows. One of the primary rRNA binding proteins, it binds directly to 16S rRNA where it nucleates assembly of the head domain of the 30S subunit. Is located at the subunit interface close to the decoding center, probably blocks exit of the E-site tRNA. This is Small ribosomal subunit protein uS7 from Hydrogenobaculum sp. (strain Y04AAS1).